The chain runs to 237 residues: Class B acid phosphatase (237 aa).

Residues 1 to 23 form the signal peptide; the sequence is MRKTPLALSAVFLLLSLNQSAFA. Catalysis depends on Asp69, which acts as the Nucleophile. Residues Asp69 and Asp71 each coordinate Mg(2+). Residue Asp71 is the Proton donor of the active site. Substrate contacts are provided by residues 137-138 and Lys177; that span reads TG. Asp192 contributes to the Mg(2+) binding site.

This sequence belongs to the class B bacterial acid phosphatase family. In terms of assembly, homotetramer. Requires Mg(2+) as cofactor.

The protein localises to the periplasm. The enzyme catalyses a phosphate monoester + H2O = an alcohol + phosphate. Dephosphorylates several organic phosphate monoesters. Also has a phosphotransferase activity catalyzing the transfer of low-energy phosphate groups from organic phosphate monoesters to free hydroxyl groups of various organic compounds. In Rahnella sp. (strain Y9602), this protein is Class B acid phosphatase.